Consider the following 399-residue polypeptide: Probable endo-xylogalacturonan hydrolase A (399 aa).

A signal peptide spans 1-19 (MTFGKAAFLSFSLFGASWA). PbH1 repeat units follow at residues 177–207 (TTNA…DIGE), 208–229 (STYV…AFKP), 231–251 (CNYL…SVGS), 260–283 (VQNV…KTYP), and 293–314 (VTNV…QIQS). The active-site Proton donor is D222. Residue H245 is part of the active site. N-linked (GlcNAc...) asparagine glycosylation is found at N295 and N382.

It belongs to the glycosyl hydrolase 28 family.

The protein localises to the secreted. Pectinolytic enzyme involved in the degradation of xylogalacturonan (xga), a galacturonan backbone heavily substituted with xylose, and which is one important component of the hairy regions of pectin. Activity requires a galacturonic acid backbone substituted with xylose. The polypeptide is Probable endo-xylogalacturonan hydrolase A (xghA) (Emericella nidulans (strain FGSC A4 / ATCC 38163 / CBS 112.46 / NRRL 194 / M139) (Aspergillus nidulans)).